The sequence spans 490 residues: Betaine aldehyde dehydrogenase (490 aa).

K(+) contacts are provided by Ser26, Ile27, and Asp93. 150–152 lines the NAD(+) pocket; that stretch reads GAW. Lys162 (charge relay system) is an active-site residue. An NAD(+)-binding site is contributed by 176–179; it reads KPSE. Val180 lines the K(+) pocket. 230–233 lines the NAD(+) pocket; sequence GTVT. Leu246 lines the K(+) pocket. Glu252 (proton acceptor) is an active-site residue. Residues Gly254, Cys286, and Glu387 each coordinate NAD(+). The active-site Nucleophile is the Cys286. A Cysteine sulfenic acid (-SOH) modification is found at Cys286. Positions 457 and 460 each coordinate K(+). Catalysis depends on Glu464, which acts as the Charge relay system.

The protein belongs to the aldehyde dehydrogenase family. Dimer of dimers. Requires K(+) as cofactor.

The catalysed reaction is betaine aldehyde + NAD(+) + H2O = glycine betaine + NADH + 2 H(+). Its pathway is amine and polyamine biosynthesis; betaine biosynthesis via choline pathway; betaine from betaine aldehyde: step 1/1. Functionally, involved in the biosynthesis of the osmoprotectant glycine betaine. Catalyzes the irreversible oxidation of betaine aldehyde to the corresponding acid. In Ectopseudomonas mendocina (strain ymp) (Pseudomonas mendocina), this protein is Betaine aldehyde dehydrogenase.